The following is a 409-amino-acid chain: Peptidase T (409 aa).

H78 is a binding site for Zn(2+). The active site involves D80. A Zn(2+)-binding site is contributed by D140. Catalysis depends on E174, which acts as the Proton acceptor. Zn(2+) contacts are provided by E175, D197, and H379.

It belongs to the peptidase M20B family. Zn(2+) is required as a cofactor.

Its subcellular location is the cytoplasm. It carries out the reaction Release of the N-terminal residue from a tripeptide.. Cleaves the N-terminal amino acid of tripeptides. This chain is Peptidase T, found in Aliivibrio salmonicida (strain LFI1238) (Vibrio salmonicida (strain LFI1238)).